Here is a 157-residue protein sequence, read N- to C-terminus: ATP synthase subunit b (157 aa).

The chain crosses the membrane as a helical span at residues 7–27 (LIAQLVVFFILAWVTMKFVWP).

It belongs to the ATPase B chain family. As to quaternary structure, F-type ATPases have 2 components, F(1) - the catalytic core - and F(0) - the membrane proton channel. F(1) has five subunits: alpha(3), beta(3), gamma(1), delta(1), epsilon(1). F(0) has three main subunits: a(1), b(2) and c(10-14). The alpha and beta chains form an alternating ring which encloses part of the gamma chain. F(1) is attached to F(0) by a central stalk formed by the gamma and epsilon chains, while a peripheral stalk is formed by the delta and b chains.

It localises to the cell inner membrane. F(1)F(0) ATP synthase produces ATP from ADP in the presence of a proton or sodium gradient. F-type ATPases consist of two structural domains, F(1) containing the extramembraneous catalytic core and F(0) containing the membrane proton channel, linked together by a central stalk and a peripheral stalk. During catalysis, ATP synthesis in the catalytic domain of F(1) is coupled via a rotary mechanism of the central stalk subunits to proton translocation. Functionally, component of the F(0) channel, it forms part of the peripheral stalk, linking F(1) to F(0). This Aromatoleum aromaticum (strain DSM 19018 / LMG 30748 / EbN1) (Azoarcus sp. (strain EbN1)) protein is ATP synthase subunit b.